Here is a 193-residue protein sequence, read N- to C-terminus: Holliday junction branch migration complex subunit RuvA (193 aa).

Positions 1–63 are domain I; that stretch reads MYAYLKGKIM…EDAQLLYGFK (63 aa). The domain II stretch occupies residues 64-141; sequence DEEEKAMFNA…TITDESELFK (78 aa). The segment at 141–142 is flexible linker; the sequence is KE. The segment at 143 to 193 is domain III; that stretch reads VNDTLLNEALLAFEALGYSKREITKIEKELKKKQFSTVDEYVKQGLQMFVS.

It belongs to the RuvA family. As to quaternary structure, homotetramer. Forms an RuvA(8)-RuvB(12)-Holliday junction (HJ) complex. HJ DNA is sandwiched between 2 RuvA tetramers; dsDNA enters through RuvA and exits via RuvB. An RuvB hexamer assembles on each DNA strand where it exits the tetramer. Each RuvB hexamer is contacted by two RuvA subunits (via domain III) on 2 adjacent RuvB subunits; this complex drives branch migration. In the full resolvosome a probable DNA-RuvA(4)-RuvB(12)-RuvC(2) complex forms which resolves the HJ.

The protein resides in the cytoplasm. The RuvA-RuvB-RuvC complex processes Holliday junction (HJ) DNA during genetic recombination and DNA repair, while the RuvA-RuvB complex plays an important role in the rescue of blocked DNA replication forks via replication fork reversal (RFR). RuvA specifically binds to HJ cruciform DNA, conferring on it an open structure. The RuvB hexamer acts as an ATP-dependent pump, pulling dsDNA into and through the RuvAB complex. HJ branch migration allows RuvC to scan DNA until it finds its consensus sequence, where it cleaves and resolves the cruciform DNA. The polypeptide is Holliday junction branch migration complex subunit RuvA (Macrococcus caseolyticus (strain JCSC5402) (Macrococcoides caseolyticum)).